The following is a 167-amino-acid chain: Ribosome-binding factor A (167 aa).

The segment at 127–167 (SRANAQYAGDADPYKHDEPDDDDFDDDDDVEVEDWDDDDEA) is disordered. Acidic residues predominate over residues 145–167 (PDDDDFDDDDDVEVEDWDDDDEA).

Belongs to the RbfA family. In terms of assembly, monomer. Binds 30S ribosomal subunits, but not 50S ribosomal subunits or 70S ribosomes.

The protein resides in the cytoplasm. Its function is as follows. One of several proteins that assist in the late maturation steps of the functional core of the 30S ribosomal subunit. Associates with free 30S ribosomal subunits (but not with 30S subunits that are part of 70S ribosomes or polysomes). Required for efficient processing of 16S rRNA. May interact with the 5'-terminal helix region of 16S rRNA. In Bifidobacterium adolescentis (strain ATCC 15703 / DSM 20083 / NCTC 11814 / E194a), this protein is Ribosome-binding factor A.